The following is a 501-amino-acid chain: 5-beta-cholestane-3-alpha,7-alpha-diol 12-alpha-hydroxylase (501 aa).

The helical transmembrane segment at 1–21 (MVLWGPVLGVLLVAIVGYLCL) threads the bilayer. Ser-326 is subject to Phosphoserine. A heme-binding site is contributed by Cys-440.

It belongs to the cytochrome P450 family. Requires heme as cofactor.

The protein localises to the endoplasmic reticulum membrane. It localises to the microsome membrane. It carries out the reaction 7alpha-hydroxycholest-4-en-3-one + reduced [NADPH--hemoprotein reductase] + O2 = 7alpha,12alpha-dihydroxycholest-4-en-3-one + oxidized [NADPH--hemoprotein reductase] + H2O + H(+). It catalyses the reaction 5beta-cholestane-3alpha,7alpha-diol + reduced [NADPH--hemoprotein reductase] + O2 = 5beta-cholestane-3alpha,7alpha,12alpha-triol + oxidized [NADPH--hemoprotein reductase] + H2O + H(+). The catalysed reaction is chenodeoxycholate + reduced [NADPH--hemoprotein reductase] + O2 = cholate + oxidized [NADPH--hemoprotein reductase] + H2O + H(+). It functions in the pathway lipid metabolism; bile acid biosynthesis. Functionally, a cytochrome P450 monooxygenase involved in primary bile acid biosynthesis. Catalyzes the 12alpha-hydroxylation of 7alpha-hydroxy-4-cholesten-3-one, an intermediate metabolite in cholic acid biosynthesis. Controls biliary balance of cholic acid and chenodeoxycholic acid, ultimately regulating the intestinal absorption of dietary lipids. Mechanistically, uses molecular oxygen inserting one oxygen atom into a substrate, and reducing the second into a water molecule, with two electrons provided by NADPH via cytochrome P450 reductase (CPR; NADPH--hemoprotein reductase). This chain is 5-beta-cholestane-3-alpha,7-alpha-diol 12-alpha-hydroxylase (CYP8B1), found in Sus scrofa (Pig).